Here is a 401-residue protein sequence, read N- to C-terminus: Voltage-gated potassium channel subunit beta-1 (401 aa).

The NADP(+) site is built by Thr90, Trp91, Gln97, and Asp119. The Proton donor/acceptor role is filled by Tyr124. Positions 192, 222, 223, 248, 277, 278, 279, 280, 281, 282, 288, 298, 357, 359, 363, 366, and 367 each coordinate NADP(+).

The protein belongs to the shaker potassium channel beta subunit family. As to quaternary structure, homotetramer. Interaction with tetrameric potassium channel alpha subunits gives rise to a heterooctamer. Identified in potassium channel complexes containing KCNA1, KCNA2, KCNA4, KCNA5, KCNA6, KCNAB1 and KCNAB2. Part of a complex containing KCNA1, KCNA4 and LGI1; interaction with LGI1 inhibits down-regulation of KCNA1 channel activity. Interacts with the dimer formed by GNB1 and GNG2; this enhances KCNA1 binding. Interacts with SQSTM. As to expression, detected in brain, in hippocampus and striatum (at protein level). Predominantly expressed in brain. No expression found in heart, skeletal muscle or kidney. In the late embryonic and early neonatal brain, highly expressed in hippocampus, cerebral cortex, caudate putamen, colliculus and cerebellum.

It is found in the cytoplasm. The protein localises to the membrane. It localises to the cell membrane. The enzyme catalyses a primary alcohol + NADP(+) = an aldehyde + NADPH + H(+). The catalysed reaction is a secondary alcohol + NADP(+) = a ketone + NADPH + H(+). In terms of biological role, regulatory subunit of the voltage-gated potassium (Kv) Shaker channels composed of pore-forming and potassium-conducting alpha subunits and of regulatory beta subunits. The beta-1/KCNAB1 cytoplasmic subunit mediates closure of delayed rectifier potassium channels by physically obstructing the pore via its N-terminal domain and increases the speed of channel closure for other family members. Promotes the inactivation of KCNA1, KCNA2, KCNA4, KCNA5 and KCNA6 alpha subunit-containing channels. Displays nicotinamide adenine dinucleotide phosphate (NADPH)-dependent aldoketoreductase activity by catalyzing the NADPH-dependent reduction of a variety of endogenous aldehydes and ketones. The binding of NADPH is required for efficient down-regulation of potassium channel activity. Oxidation of the bound NADPH restrains N-terminal domain from blocking the channel, thereby decreasing N-type inactivation of potassium channel activity. In Mus musculus (Mouse), this protein is Voltage-gated potassium channel subunit beta-1.